A 314-amino-acid chain; its full sequence is (-)-isopiperitenone reductase (314 aa).

10–33 lines the NADP(+) pocket; that stretch reads VTGANKGIGFEICRQLAEKGIIVI. A substrate-binding site is contributed by serine 182.

The protein belongs to the short-chain dehydrogenases/reductases (SDR) family.

It localises to the cytoplasm. The enzyme catalyses (2R,5R)-isopulegone + NADP(+) = (6R)-isopiperitenone + NADPH + H(+). It functions in the pathway secondary metabolite biosynthesis; terpenoid biosynthesis. Its function is as follows. Monoterpene synthase that catalyzes the specific reduction of the 1(2)-double bond of (-)-isopiperitenone to produce (+)-cis-isopulegone. Does not catalyze the reverse reaction. Unable to reduce (+)-pulegone, (+)-cis-isopulegone, (-)-menthone or the 1,2-double bond of (-)-carvone. Able to utilize NADH with 20% the efficiency of NADPH. The chain is (-)-isopiperitenone reductase from Mentha piperita (Peppermint).